A 118-amino-acid polypeptide reads, in one-letter code: Cobalt transport protein CbiN (118 aa).

Helical transmembrane passes span 7–27 (INAL…VLGL) and 70–90 (SALF…YFGL). The disordered stretch occupies residues 99 to 118 (ERASAASGAAAAPGDAPEGD). A compositionally biased stretch (low complexity) spans 102–118 (SAASGAAAAPGDAPEGD).

The protein belongs to the CbiN family. In terms of assembly, forms an energy-coupling factor (ECF) transporter complex composed of an ATP-binding protein (A component, CbiO), a transmembrane protein (T component, CbiQ) and 2 possible substrate-capture proteins (S components, CbiM and CbiN) of unknown stoichimetry.

It localises to the cell membrane. The protein operates within cofactor biosynthesis; adenosylcobalamin biosynthesis. Functionally, part of the energy-coupling factor (ECF) transporter complex CbiMNOQ involved in cobalt import. The polypeptide is Cobalt transport protein CbiN (Streptomyces coelicolor (strain ATCC BAA-471 / A3(2) / M145)).